A 321-amino-acid chain; its full sequence is Hydropyrene synthase (321 aa).

The Mg(2+) site is built by aspartate 82, asparagine 225, serine 229, and glutamate 233. The DDxx(x)D/E motif motif lies at 82–87 (DDRAID). The NDxxSxxxD/E motif signature appears at 225–233 (NDLHSFARE).

Belongs to the terpene synthase family. It depends on Mg(2+) as a cofactor.

The enzyme catalyses (2E,6E,10E)-geranylgeranyl diphosphate = hydropyrene + diphosphate. It catalyses the reaction (2E,6E,10E)-geranylgeranyl diphosphate + H2O = hydropyrenol + diphosphate. It carries out the reaction (2E,6E,10E)-geranylgeranyl diphosphate = isoelisabethatriene + diphosphate. It functions in the pathway secondary metabolite biosynthesis; terpenoid biosynthesis. Its function is as follows. Terpene synthase that catalyzes the conversion of geranylgeranyl diphosphate (GGPP) into a mixture of diterpenes, including hydropyrene (HP), hydropyrenol (HPol), isoelisabethatriene and traces of isoelisabethatriene B. Hydropyrene is the main product. Some other diterpenoids are also produced in very low quantities. This is Hydropyrene synthase from Streptomyces clavuligerus.